The primary structure comprises 175 residues: Large ribosomal subunit protein eL14 (175 aa).

The segment at 150–175 (KAAKMDSTEGAKRRMQKAIAARKAKK) is disordered. Residues 152–161 (AKMDSTEGAK) are compositionally biased toward basic and acidic residues. The segment covering 162–175 (RRMQKAIAARKAKK) has biased composition (basic residues).

Belongs to the eukaryotic ribosomal protein eL14 family.

Functionally, component of the large ribosomal subunit. The ribosome is a large ribonucleoprotein complex responsible for the synthesis of proteins in the cell. The chain is Large ribosomal subunit protein eL14 (RPL14) from Leishmania donovani.